We begin with the raw amino-acid sequence, 505 residues long: Glutamate--tRNA ligase (505 aa).

Residues 12 to 22 carry the 'HIGH' region motif; the sequence is PSPTGDPHVGT. The 'KMSKS' region signature appears at 253–257; the sequence is KLSKR. Residue Lys-256 participates in ATP binding.

Belongs to the class-I aminoacyl-tRNA synthetase family. Glutamate--tRNA ligase type 1 subfamily. As to quaternary structure, monomer.

It is found in the cytoplasm. The enzyme catalyses tRNA(Glu) + L-glutamate + ATP = L-glutamyl-tRNA(Glu) + AMP + diphosphate. Functionally, catalyzes the attachment of glutamate to tRNA(Glu) in a two-step reaction: glutamate is first activated by ATP to form Glu-AMP and then transferred to the acceptor end of tRNA(Glu). The sequence is that of Glutamate--tRNA ligase from Chlamydia pneumoniae (Chlamydophila pneumoniae).